We begin with the raw amino-acid sequence, 33 residues long: Trypsin inhibitor 1 (33 aa).

3 cysteine pairs are disulfide-bonded: Cys-1–Cys-17, Cys-8–Cys-21, and Cys-16–Cys-32.

In terms of tissue distribution, expressed in leaves and fruit flesh (at protein level).

Inhibits trypsin (IC(50)=471 nM). The chain is Trypsin inhibitor 1 from Beta vulgaris subsp. vulgaris (Beet).